The chain runs to 333 residues: Fructose-1,6-bisphosphatase class 1 (333 aa).

The Mg(2+) site is built by Glu92, Asp113, Leu115, and Asp116. Residues 116–119 (DGSS), Asn209, Tyr242, and Lys272 each bind substrate. A Mg(2+)-binding site is contributed by Glu278.

It belongs to the FBPase class 1 family. Homotetramer. Mg(2+) is required as a cofactor.

It localises to the cytoplasm. It catalyses the reaction beta-D-fructose 1,6-bisphosphate + H2O = beta-D-fructose 6-phosphate + phosphate. It participates in carbohydrate biosynthesis; Calvin cycle. The protein is Fructose-1,6-bisphosphatase class 1 of Pelodictyon phaeoclathratiforme (strain DSM 5477 / BU-1).